A 238-amino-acid polypeptide reads, in one-letter code: 6-phosphogluconolactonase (238 aa).

It belongs to the glucosamine/galactosamine-6-phosphate isomerase family. 6-phosphogluconolactonase subfamily.

The enzyme catalyses 6-phospho-D-glucono-1,5-lactone + H2O = 6-phospho-D-gluconate + H(+). It functions in the pathway carbohydrate degradation; pentose phosphate pathway; D-ribulose 5-phosphate from D-glucose 6-phosphate (oxidative stage): step 2/3. Functionally, hydrolysis of 6-phosphogluconolactone to 6-phosphogluconate. This Mesorhizobium japonicum (strain LMG 29417 / CECT 9101 / MAFF 303099) (Mesorhizobium loti (strain MAFF 303099)) protein is 6-phosphogluconolactonase (pgl).